A 404-amino-acid chain; its full sequence is S-adenosylmethionine synthase (404 aa).

Polar residues predominate over residues 1–13 (MSQSRYFFTSESV). The tract at residues 1–21 (MSQSRYFFTSESVSEGHPDKV) is disordered. His-17 contacts ATP. Asp-19 is a Mg(2+) binding site. Glu-45 is a K(+) binding site. Residues Glu-58 and Gln-101 each contribute to the L-methionine site. Residues 101–111 (QSPDINRGVDR) are flexible loop. ATP contacts are provided by residues 172–174 (DAK), 245–246 (RF), Asp-254, 260–261 (RK), Ala-277, and Lys-281. Asp-254 contributes to the L-methionine binding site. Residue Lys-285 coordinates L-methionine.

It belongs to the AdoMet synthase family. Homotetramer; dimer of dimers. Requires Mg(2+) as cofactor. The cofactor is K(+).

Its subcellular location is the cytoplasm. The catalysed reaction is L-methionine + ATP + H2O = S-adenosyl-L-methionine + phosphate + diphosphate. The protein operates within amino-acid biosynthesis; S-adenosyl-L-methionine biosynthesis; S-adenosyl-L-methionine from L-methionine: step 1/1. Its function is as follows. Catalyzes the formation of S-adenosylmethionine (AdoMet) from methionine and ATP. The overall synthetic reaction is composed of two sequential steps, AdoMet formation and the subsequent tripolyphosphate hydrolysis which occurs prior to release of AdoMet from the enzyme. The protein is S-adenosylmethionine synthase of Chlorobium phaeobacteroides (strain DSM 266 / SMG 266 / 2430).